Reading from the N-terminus, the 341-residue chain is Casein kinase I isoform alpha (341 aa).

The Protein kinase domain occupies 16 to 284; it reads YKLIRKIGSG…YLRQLFRILF (269 aa). ATP is bound by residues 22–30 and Lys45; that span reads IGSGSFGDI. The active-site Proton acceptor is Asp135. Polar residues predominate over residues 306–320; it reads QSQSSGVPGTNTTTQ. The interval 306 to 341 is disordered; sequence QSQSSGVPGTNTTTQGATVPSAGVPAGVAPGGTTPQ. Positions 321–341 are enriched in low complexity; it reads GATVPSAGVPAGVAPGGTTPQ.

Belongs to the protein kinase superfamily. CK1 Ser/Thr protein kinase family. Casein kinase I subfamily.

The enzyme catalyses L-seryl-[protein] + ATP = O-phospho-L-seryl-[protein] + ADP + H(+). It carries out the reaction L-threonyl-[protein] + ATP = O-phospho-L-threonyl-[protein] + ADP + H(+). The protein is Casein kinase I isoform alpha (kin-19) of Caenorhabditis elegans.